Here is a 248-residue protein sequence, read N- to C-terminus: DNA repair protein RecO (248 aa).

This sequence belongs to the RecO family.

Involved in DNA repair and RecF pathway recombination. In Bacillus cereus (strain 03BB102), this protein is DNA repair protein RecO.